A 760-amino-acid chain; its full sequence is Serine/threonine-protein kinase dkf-1 (760 aa).

2 consecutive Phorbol-ester/DAG-type zinc fingers follow at residues 103–153 and 194–244; these read PHVV…GIIV and PHTL…PSNC. The region spanning 316 to 444 is the PH domain; sequence KNLEGWMIHF…QFIKESLQPP (129 aa). In terms of domain architecture, Protein kinase spans 464–725; the sequence is VLSDKTLGSG…IEKCLEHGWL (262 aa). Residues 470 to 478 and Lys493 each bind ATP; that span reads LGSGQFGTV. Catalysis depends on Asp589, which acts as the Proton acceptor. Residue Thr626 is modified to Phosphothreonine.

The protein belongs to the protein kinase superfamily. CAMK Ser/Thr protein kinase family. PKD subfamily. Mg(2+) is required as a cofactor. Prolonged phosphorylation at Thr-626 results in ubiquitination and degradation.

The protein resides in the cytoplasm. Its subcellular location is the membrane. It carries out the reaction L-seryl-[protein] + ATP = O-phospho-L-seryl-[protein] + ADP + H(+). The catalysed reaction is L-threonyl-[protein] + ATP = O-phospho-L-threonyl-[protein] + ADP + H(+). Its activity is regulated as follows. Activated by DAG and phorbol esters. Phorbol-ester/DAG-type domain 1 binds phorbol ester with high affinity and mediates accumulation at the cell periphery. Phorbol-ester/DAG-type domain 2 binds phorbol ester with low affinity but may mediate initial contact, resulting in a conformational change allowing previously occluded domain 1 to anchor the kinase. Phosphorylation on Thr-626 is then also required for activation and may also result in a further conformational change. Its function is as follows. Converts transient diacylglycerol (DAG) signals into prolonged physiological effects, independently of PKC. Role in the regulation of growth and neuromuscular control of movement. Involved in immune response to S.aureus bacterium by activating transcription factor hlh-30 downstream of phospholipase plc-1. This Caenorhabditis briggsae protein is Serine/threonine-protein kinase dkf-1.